A 301-amino-acid chain; its full sequence is uncharacterized protein (301 aa).

A signal peptide spans 1–22 (MPGRFTVALVIALGGTCGVADA). The GP-PDE domain maps to 31 to 300 (PMIVAHRAGT…DSPLAAQQWR (270 aa)).

This is an uncharacterized protein from Mycobacterium tuberculosis (strain ATCC 25618 / H37Rv).